The following is a 99-amino-acid chain: Nucleoid-associated protein EbfC (99 aa).

It belongs to the YbaB/EbfC family. As to quaternary structure, homodimer. Can form tetramers and octamers in solution.

It is found in the cytoplasm. It localises to the nucleoid. Functionally, binds to DNA and alters its conformation. May be involved in global regulation of gene expression. Binds specifically and non-specifically to DNA, preferentially to the 4 bp broken palindrome 5'-GTnAC-3'. Affects expression of a wide variety of genes, encoding both structural and metabolic proteins. The protein is Nucleoid-associated protein EbfC of Borreliella burgdorferi (strain ATCC 35210 / DSM 4680 / CIP 102532 / B31) (Borrelia burgdorferi).